A 126-amino-acid polypeptide reads, in one-letter code: Cyclin-dependent kinase 2-associated protein 2 (126 aa).

Positions 1–48 (MSYKPIAPAPSSTPGSSTPGPGTPVPTGSVPSPSGSVPGAGAPFRPLF) are disordered. Residues 9-43 (APSSTPGSSTPGPGTPVPTGSVPSPSGSVPGAGAP) are compositionally biased toward low complexity. The interaction with CDK2 stretch occupies residues 64 to 106 (PPGAQGSQSTYTDLLSVIEEMGKEIRPTYAGSKSAMERLKRGI).

It belongs to the CDK2AP family. Component of the nucleosome remodeling and deacetylase (NuRD) repressor complex, composed of core proteins MTA1, MTA2, MTA3, RBBP4, RBBP7, HDAC1, HDAC2, MBD2, MBD3, and peripherally associated proteins CDK2AP1, CDK2AP2, GATAD2A, GATAD2B, CHD3, CHD4 and CHD5. The exact stoichiometry of the NuRD complex is unknown, and some subunits such as MBD2 and MBD3, GATAD2A and GATAD2B, and CHD3, CHD4 and CHD5 define mutually exclusive NuRD complexes. Interacts with CDK2AP1. Interacts with CDK2. Interacts with MAPK1. Post-translationally, phosphorylated by MAPK1 and CDK2. Ubiquitous.

The protein localises to the cytoplasm. The protein resides in the nucleus. Its function is as follows. Acts as a component of the histone deacetylase NuRD complex which participates in the remodeling of chromatin. Inhibits cell cycle G1/S phase transition by repressing CDK2 expression and activation; represses CDK2 activation by inhibiting its interaction with cyclin E and A. Plays a role in regulating the self-renewal of embryonic stem cells (ESCs) and in maintaining cell survival during terminal differentiation of ESCs. Regulates microtubule organization of metaphase II oocytes. The protein is Cyclin-dependent kinase 2-associated protein 2 (CDK2AP2) of Homo sapiens (Human).